Reading from the N-terminus, the 319-residue chain is Protein SODIUM POTASSIUM ROOT DEFECTIVE 1 (319 aa).

The segment covering 1–13 has biased composition (polar residues); the sequence is MLCASQASTTTLC. 2 disordered regions span residues 1–113 and 191–248; these read MLCA…TPQG and SPDN…NSSS. Residues 14 to 27 show a composition bias toward low complexity; sequence STMDQTSQPSSSSS. A compositionally biased stretch (basic and acidic residues) spans 36 to 49; that stretch reads AIDRHNPIIRDGRR. Residues 58–67 are compositionally biased toward low complexity; that stretch reads LNPSSSSSST. 2 stretches are compositionally biased toward polar residues: residues 104–113 and 200–210; these read SCFSSDTPQG and TKASPTASLSS. Residues 224-242 are compositionally biased toward pro residues; it reads SPPPPPPPSPPQSSPPSPP. One can recognise an HMA domain in the interval 249–315; that stretch reads DQVVVLRVSL…KVKNAQFWPE (67 aa). Cys260 and Cys263 together coordinate Zn(2+).

As to quaternary structure, interacts with FT, but not with TSF (TWIN SISTER OF FT). Expressed in vascular tissues of cotyledons, rosette leaves and roots in developing seedlings before and during the floral transition. Expressed specifically in the phloem companion cells. Not detected in embryos or seeds. Not detected in the vegetative shoot apex.

Its subcellular location is the cytoplasm. It is found in the nucleus. The protein resides in the endoplasmic reticulum. In terms of biological role, required for root meristem maintenance after germination. Involved in phloem translocation, starch accumulation and flowering. Promotes flowering in the photoperiod pathway. Regulates long-distance movement of FT from leaves to the shoot apex through the phloem stream. The sequence is that of Protein SODIUM POTASSIUM ROOT DEFECTIVE 1 from Arabidopsis thaliana (Mouse-ear cress).